The primary structure comprises 336 residues: Probable deoxyhypusine synthase (336 aa).

Lys308 acts as the Nucleophile in catalysis.

Belongs to the deoxyhypusine synthase family. Requires NAD(+) as cofactor.

It catalyses the reaction [eIF5A protein]-L-lysine + spermidine = [eIF5A protein]-deoxyhypusine + propane-1,3-diamine. It functions in the pathway protein modification; eIF5A hypusination. In terms of biological role, catalyzes the NAD-dependent oxidative cleavage of spermidine and the subsequent transfer of the butylamine moiety of spermidine to the epsilon-amino group of a specific lysine residue of the eIF-5A precursor protein to form the intermediate deoxyhypusine residue. This is Probable deoxyhypusine synthase from Thermococcus gammatolerans (strain DSM 15229 / JCM 11827 / EJ3).